A 347-amino-acid chain; its full sequence is Protein-glutamate methylesterase/protein-glutamine glutaminase 3 (347 aa).

Residues 3 to 120 (QVFIVDDSAV…KNFLEESEIL (118 aa)) enclose the Response regulatory domain. D54 bears the 4-aspartylphosphate mark. The region spanning 159–347 (IDTTDKLIAI…SKIVGEVQYF (189 aa)) is the CheB-type methylesterase domain. Catalysis depends on residues S171, H197, and D293.

This sequence belongs to the CheB family. In terms of processing, phosphorylated by CheA. Phosphorylation of the N-terminal regulatory domain activates the methylesterase activity.

The protein resides in the cytoplasm. The enzyme catalyses [protein]-L-glutamate 5-O-methyl ester + H2O = L-glutamyl-[protein] + methanol + H(+). It carries out the reaction L-glutaminyl-[protein] + H2O = L-glutamyl-[protein] + NH4(+). Its function is as follows. Involved in chemotaxis. Part of a chemotaxis signal transduction system that modulates chemotaxis in response to various stimuli. Catalyzes the demethylation of specific methylglutamate residues introduced into the chemoreceptors (methyl-accepting chemotaxis proteins or MCP) by CheR. Also mediates the irreversible deamidation of specific glutamine residues to glutamic acid. In Leptospira interrogans serogroup Icterohaemorrhagiae serovar copenhageni (strain Fiocruz L1-130), this protein is Protein-glutamate methylesterase/protein-glutamine glutaminase 3.